Reading from the N-terminus, the 473-residue chain is Catalase easC (473 aa).

Residues 1-15 (MASEVSVASSGSEHS) show a composition bias toward low complexity. A disordered region spans residues 1–31 (MASEVSVASSGSEHSGAQKCPFQDPGLSSMD). The active site involves His54. Tyr344 lines the heme pocket. The tract at residues 352-389 (LGPNNLDLPANRTKKLADGSRPEKAEMAPQKVPSQEHA) is disordered. Residues 366–377 (KLADGSRPEKAE) show a composition bias toward basic and acidic residues.

It belongs to the catalase family. Heme is required as a cofactor.

It participates in alkaloid biosynthesis; ergot alkaloid biosynthesis. Functionally, catalase; part of the gene cluster that mediates the biosynthesis of fungal ergot alkaloid. DmaW catalyzes the first step of ergot alkaloid biosynthesis by condensing dimethylallyl diphosphate (DMAP) and tryptophan to form 4-dimethylallyl-L-tryptophan. The second step is catalyzed by the methyltransferase easF that methylates 4-dimethylallyl-L-tryptophan in the presence of S-adenosyl-L-methionine, resulting in the formation of 4-dimethylallyl-L-abrine. The catalase easC and the FAD-dependent oxidoreductase easE then transform 4-dimethylallyl-L-abrine to chanoclavine-I which is further oxidized by easD in the presence of NAD(+), resulting in the formation of chanoclavine-I aldehyde. Agroclavine dehydrogenase easG then mediates the conversion of chanoclavine-I aldehyde to agroclavine via a non-enzymatic adduct reaction: the substrate is an iminium intermediate that is formed spontaneously from chanoclavine-I aldehyde in the presence of glutathione. The presence of easA is not required to complete this reaction. Further conversion of agroclavine to paspalic acid is a two-step process involving oxidation of agroclavine to elymoclavine and of elymoclavine to paspalic acid, the second step being performed by the elymoclavine oxidase cloA. Paspalic acid is then further converted to D-lysergic acid. Ergopeptines are assembled from D-lysergic acid and three different amino acids by the D-lysergyl-peptide-synthetases composed each of a monomudular and a trimodular nonribosomal peptide synthetase subunit. LpsB and lpsC encode the monomodular subunits responsible for D-lysergic acid activation and incorporation into the ergopeptine backbone. LpsA1 and A2 subunits encode the trimodular nonribosomal peptide synthetase assembling the tripeptide portion of ergopeptines. LpsA1 is responsible for formation of the major ergopeptine, ergotamine, and lpsA2 for alpha-ergocryptine, the minor ergopeptine of the total alkaloid mixture elaborated by C.purpurea. D-lysergyl-tripeptides are assembled by the nonribosomal peptide synthetases and released as N-(D-lysergyl-aminoacyl)-lactams. Cyclolization of the D-lysergyl-tripeptides is performed by the Fe(2+)/2-ketoglutarate-dependent dioxygenase easH which introduces a hydroxyl group into N-(D-lysergyl-aminoacyl)-lactam at alpha-C of the aminoacyl residue followed by spontaneous condensation with the terminal lactam carbonyl group. The chain is Catalase easC from Claviceps purpurea (strain 20.1) (Ergot fungus).